The following is a 710-amino-acid chain: TRP-like ion channel pkd2 (710 aa).

An N-terminal signal peptide occupies residues 1–23; it reads MRLWRSPLLLLVVVVELFSWADA. 9 consecutive transmembrane segments (helical) span residues 173 to 193, 197 to 217, 322 to 342, 376 to 396, 404 to 424, 466 to 486, 492 to 512, 525 to 545, and 555 to 575; these read WVMC…SPVL, ALWE…IQAL, FFAT…LVAM, FFYR…MWEI, LAFL…YAFV, FFYF…FIGF, KVQG…MVIL, IGVA…CQAF, and IGII…LGIF. Phosphoserine is present on residues S599 and S632. The segment at 689-710 is disordered; that stretch reads RISENNNNAERRRKPLPNNAFR.

Belongs to the transient receptor potential (TRP) ion channel family. As to quaternary structure, interacts with rho1.

It is found in the cell membrane. The protein localises to the golgi apparatus membrane. Acts as a key signaling component in the regulation of cell shape and cell wall synthesis through interaction with GTPase Rho1. This Schizosaccharomyces pombe (strain 972 / ATCC 24843) (Fission yeast) protein is TRP-like ion channel pkd2 (pkd2).